A 218-amino-acid chain; its full sequence is Probable WRKY transcription factor 12 (218 aa).

Residues 49–63 are compositionally biased toward low complexity; the sequence is SSLSSPSFPIHNSSS. 2 disordered regions span residues 49 to 120 and 199 to 218; these read SSLS…DMKN and HNHI…LSSF. Positions 64-77 are enriched in polar residues; sequence TTTTHAPLGFSNNL. Residues 105–116 show a composition bias toward low complexity; the sequence is SNSWWRSNSGSG. A DNA-binding region (WRKY) is located at residues 139–204; the sequence is SDVDVLDDGY…YEGRHNHIPS (66 aa).

It belongs to the WRKY group II-c family.

The protein localises to the nucleus. In terms of biological role, transcription factor. Interacts specifically with the W box (5'-(T)TGAC[CT]-3'), a frequently occurring elicitor-responsive cis-acting element. The polypeptide is Probable WRKY transcription factor 12 (WRKY12) (Arabidopsis thaliana (Mouse-ear cress)).